Here is a 76-residue protein sequence, read N- to C-terminus: Conotoxin Cal29b (76 aa).

A signal peptide spans 1-43; sequence MKLTCVLIVAVLILAACQFTAANMARYGKTQIARSDVKSIDAR.

It belongs to the conotoxin O1 superfamily. In terms of processing, may contain 4 disulfide bonds. As to expression, expressed by the venom duct.

It is found in the secreted. Is able to inhibit the growth of Mycobacterium tuberculosis (MIC=0.22-3.52 uM against strain H37Rv and 2 multidrug-resistant strains). May also show neurotoxic activity. This chain is Conotoxin Cal29b, found in Californiconus californicus (California cone).